Reading from the N-terminus, the 503-residue chain is Opine oxidase subunit A (503 aa).

It to T-protein and to dimethylglycine dehydrogenase. Heterodimer of a subunit A and a subunit B.

The protein operates within opine metabolism; octopine degradation. In terms of biological role, oxidative cleavage of octopine into L-arginine and pyruvate. The protein is Opine oxidase subunit A (ooxA) of Agrobacterium tumefaciens (strain Ach5).